The sequence spans 208 residues: MARYRGAVERLERRFGVSLALKGERRLSGKSALDKRAYGPGQHGQRRAKTSDYGLQLKEKQKAKMMYGISEKQFRSIFVEANRLDGNTGENLIRLIERRLDNVVYRMGFATTRSSARQLVTHGHVLVDGKRLDIPSYFVRSGQKIEIKEKTKSNSQVVRAMELTAQTGIVPWIDVEKDKKYGIFTRYPEREEVVVPIEERLIVELYSK.

Residues 31–51 form a disordered region; it reads SALDKRAYGPGQHGQRRAKTS. Residues 98 to 160 form the S4 RNA-binding domain; that stretch reads RRLDNVVYRM…TKSNSQVVRA (63 aa).

This sequence belongs to the universal ribosomal protein uS4 family. As to quaternary structure, part of the 30S ribosomal subunit. Contacts protein S5. The interaction surface between S4 and S5 is involved in control of translational fidelity.

Its function is as follows. One of the primary rRNA binding proteins, it binds directly to 16S rRNA where it nucleates assembly of the body of the 30S subunit. In terms of biological role, with S5 and S12 plays an important role in translational accuracy. The polypeptide is Small ribosomal subunit protein uS4 (Helicobacter pylori (strain ATCC 700392 / 26695) (Campylobacter pylori)).